A 144-amino-acid polypeptide reads, in one-letter code: Maximins 10/H3 (144 aa).

A signal peptide spans 1–18; sequence MNFKYIVAVSFLIASAYA. Residues 19-43 constitute a propeptide that is removed on maturation; it reads RSVKNDEQSLSQRDVLDEESLREFR. Ser70 carries the post-translational modification Serine amide. The propeptide occupies 74–123; it reads TAEDHEVMKRLEAVMRDLDSLDYPEEATERETRGFNQEEIANLFTKKEKR. Position 143 is an isoleucine amide (Ile143).

Belongs to the bombinin family. In terms of tissue distribution, expressed by the skin glands.

Its subcellular location is the secreted. Its function is as follows. Maximin-10 shows antimicrobial activity against bacteria and against the fungus C.albicans. It has little hemolytic activity. Maximin-H3 shows antibacterial activity against both Gram-positive and Gram-negative bacteria. It also shows antimicrobial activity against the fungus C.albicans. Shows strong hemolytic activity. The polypeptide is Maximins 10/H3 (Bombina maxima (Giant fire-bellied toad)).